A 245-amino-acid polypeptide reads, in one-letter code: 1-(5-phosphoribosyl)-5-[(5-phosphoribosylamino)methylideneamino] imidazole-4-carboxamide isomerase (245 aa).

D7 functions as the Proton acceptor in the catalytic mechanism. D129 (proton donor) is an active-site residue.

The protein belongs to the HisA/HisF family.

Its subcellular location is the cytoplasm. It catalyses the reaction 1-(5-phospho-beta-D-ribosyl)-5-[(5-phospho-beta-D-ribosylamino)methylideneamino]imidazole-4-carboxamide = 5-[(5-phospho-1-deoxy-D-ribulos-1-ylimino)methylamino]-1-(5-phospho-beta-D-ribosyl)imidazole-4-carboxamide. The protein operates within amino-acid biosynthesis; L-histidine biosynthesis; L-histidine from 5-phospho-alpha-D-ribose 1-diphosphate: step 4/9. This chain is 1-(5-phosphoribosyl)-5-[(5-phosphoribosylamino)methylideneamino] imidazole-4-carboxamide isomerase, found in Vibrio campbellii (strain ATCC BAA-1116).